The following is a 137-amino-acid chain: MEVNYFNQYKEETTQFEVILETVFKDIKEEKSMQVIFVDNDQIRDINKMYRNIDKPTDVISFPNDDEKDDSLGDIFISIDQAKIQALDYGHTLEREIGFLAVHGYLHLLGYDHHTEAEEKEMFTLQEEILNKANLKR.

Zn(2+)-binding residues include histidine 103, histidine 107, and histidine 113.

Belongs to the endoribonuclease YbeY family. Zn(2+) is required as a cofactor.

It localises to the cytoplasm. Single strand-specific metallo-endoribonuclease involved in late-stage 70S ribosome quality control and in maturation of the 3' terminus of the 16S rRNA. This chain is Endoribonuclease YbeY, found in Acholeplasma laidlawii (strain PG-8A).